The sequence spans 1326 residues: Coiled-coil domain-containing protein 171 (1326 aa).

8 coiled-coil regions span residues 53–294 (TTKH…RAAH), 323–391 (AEAV…RLQY), 450–561 (SFSV…AFHK), 597–630 (SELC…ICKN), 660–707 (WHRQ…EQLV), 765–792 (FKLE…MKKK), 979–1143 (FTQR…KECV), and 1217–1241 (IMTL…LHTA). The disordered stretch occupies residues 1306–1326 (SSHSSPVTMSANANRPTQIGL).

This chain is Coiled-coil domain-containing protein 171 (CCDC171), found in Homo sapiens (Human).